Consider the following 336-residue polypeptide: Sulfate/thiosulfate import ATP-binding protein CysA (336 aa).

In terms of domain architecture, ABC transporter spans 3–233; sequence ITIENVSKSF…PASPFVMSFI (231 aa). 35–42 contributes to the ATP binding site; sequence GPSGSGKS.

The protein belongs to the ABC transporter superfamily. Sulfate/tungstate importer (TC 3.A.1.6) family. The complex is composed of two ATP-binding proteins (CysA), two transmembrane proteins (CysT and CysW) and a solute-binding protein (CysP).

It localises to the cell inner membrane. It catalyses the reaction sulfate(out) + ATP + H2O = sulfate(in) + ADP + phosphate + H(+). It carries out the reaction thiosulfate(out) + ATP + H2O = thiosulfate(in) + ADP + phosphate + H(+). Functionally, part of the ABC transporter complex CysAWTP involved in sulfate/thiosulfate import. Responsible for energy coupling to the transport system. The chain is Sulfate/thiosulfate import ATP-binding protein CysA from Thermosynechococcus vestitus (strain NIES-2133 / IAM M-273 / BP-1).